Here is a 219-residue protein sequence, read N- to C-terminus: Translation initiation factor IF-3 (219 aa).

It belongs to the IF-3 family. Monomer.

It is found in the cytoplasm. Functionally, IF-3 binds to the 30S ribosomal subunit and shifts the equilibrium between 70S ribosomes and their 50S and 30S subunits in favor of the free subunits, thus enhancing the availability of 30S subunits on which protein synthesis initiation begins. The polypeptide is Translation initiation factor IF-3 (Prochlorococcus marinus (strain MIT 9313)).